A 187-amino-acid chain; its full sequence is Photosystem I assembly protein Ycf4 (187 aa).

2 consecutive transmembrane segments (helical) span residues 23 to 43 and 70 to 90; these read INYFWSFSIFFGAFGFLIVGI and FYGIAGIFLSFYLWFTMILGV.

This sequence belongs to the Ycf4 family.

It localises to the plastid. Its subcellular location is the chloroplast thylakoid membrane. Seems to be required for the assembly of the photosystem I complex. The chain is Photosystem I assembly protein Ycf4 from Chara vulgaris (Common stonewort).